The following is a 224-amino-acid chain: Thiamine-triphosphatase (224 aa).

Ala2 is modified (N-acetylalanine). One can recognise a CYTH domain in the interval 5–201 (LIEVERKFTP…AKLLVYLQRF (197 aa)). Residues Glu7 and Glu9 each contribute to the Mg(2+) site. Residues Lys11, Arg55, Arg57, Lys65, and Arg125 each contribute to the substrate site. Mg(2+) is bound by residues Asp145, Glu157, and Glu159. Glu157 contacts substrate. Lys193 provides a ligand contact to substrate.

Belongs to the ThTPase family. In terms of assembly, monomer. Requires Mg(2+) as cofactor.

The protein resides in the cytoplasm. It catalyses the reaction thiamine triphosphate + H2O = thiamine diphosphate + phosphate + H(+). In terms of biological role, hydrolase highly specific for thiamine triphosphate (ThTP). The chain is Thiamine-triphosphatase (Thtpa) from Rattus norvegicus (Rat).